A 68-amino-acid polypeptide reads, in one-letter code: Conotoxin ba14a (68 aa).

The first 20 residues, 1–20, serve as a signal peptide directing secretion; sequence MKLSVMFIVALVLSLSMTDG. Positions 21 to 50 are excised as a propeptide; it reads LPRRAENGGRIFRQHSPDSMDPQTRQIKTR.

Contains 2 disulfide bonds. In terms of tissue distribution, expressed by the venom duct.

The protein localises to the secreted. This Conus bayani (Bayan's cone) protein is Conotoxin ba14a.